A 72-amino-acid chain; its full sequence is Metallothionein-like protein 1B (72 aa).

The protein belongs to the metallothionein superfamily. Type 15 family. Expressed in leaves of mature plants.

In terms of biological role, metallothioneins have a high content of cysteine residues that bind various heavy metals. Functions as a metal chelator of nickel (Ni), cadmium (Cd), zinc (Zn) and copper (Cu). Possesses higher affinity for Ni and Cd ions compared to Zn and Cu ions. The polypeptide is Metallothionein-like protein 1B (MT1B) (Oryza sativa subsp. japonica (Rice)).